A 164-amino-acid chain; its full sequence is UPF0304 protein NT01EI_2691 (164 aa).

The protein belongs to the UPF0304 family.

The chain is UPF0304 protein NT01EI_2691 from Edwardsiella ictaluri (strain 93-146).